We begin with the raw amino-acid sequence, 179 residues long: MLMGSIARRYARALFSLAVEQGRVEPWNDALQVLKNAVEGSPDLRDVLSNPVYSKEQRRAIVEKLASALKLEREPANLLFLLGDRNRLAYLPAVVDTFRALADQHLGRLRARVTSAVPLDAQAAQAIADRLSQATKATVLLDRAVDPALLGGVVAQVGSLVYDGSLRTQLEDLRKTLKQ.

The protein belongs to the ATPase delta chain family. F-type ATPases have 2 components, F(1) - the catalytic core - and F(0) - the membrane proton channel. F(1) has five subunits: alpha(3), beta(3), gamma(1), delta(1), epsilon(1). F(0) has three main subunits: a(1), b(2) and c(10-14). The alpha and beta chains form an alternating ring which encloses part of the gamma chain. F(1) is attached to F(0) by a central stalk formed by the gamma and epsilon chains, while a peripheral stalk is formed by the delta and b chains.

The protein resides in the cell inner membrane. Its function is as follows. F(1)F(0) ATP synthase produces ATP from ADP in the presence of a proton or sodium gradient. F-type ATPases consist of two structural domains, F(1) containing the extramembraneous catalytic core and F(0) containing the membrane proton channel, linked together by a central stalk and a peripheral stalk. During catalysis, ATP synthesis in the catalytic domain of F(1) is coupled via a rotary mechanism of the central stalk subunits to proton translocation. In terms of biological role, this protein is part of the stalk that links CF(0) to CF(1). It either transmits conformational changes from CF(0) to CF(1) or is implicated in proton conduction. This Anaeromyxobacter dehalogenans (strain 2CP-C) protein is ATP synthase subunit delta.